Consider the following 383-residue polypeptide: L-lactate dehydrogenase (383 aa).

An FMN hydroxy acid dehydrogenase domain is found at Met1–Pro380. Tyr24 is a substrate binding site. 2 residues coordinate FMN: Ser106 and Gln127. Tyr129 serves as a coordination point for substrate. Thr155 lines the FMN pocket. Arg164 provides a ligand contact to substrate. FMN is bound at residue Lys251. Catalysis depends on His275, which acts as the Proton acceptor. Residue Arg278 coordinates substrate. Asp306–Arg330 contacts FMN.

It belongs to the FMN-dependent alpha-hydroxy acid dehydrogenase family. It depends on FMN as a cofactor.

Its subcellular location is the cell inner membrane. It catalyses the reaction (S)-lactate + A = pyruvate + AH2. Its function is as follows. Catalyzes the conversion of L-lactate to pyruvate. Is coupled to the respiratory chain. This chain is L-lactate dehydrogenase, found in Caulobacter vibrioides (strain ATCC 19089 / CIP 103742 / CB 15) (Caulobacter crescentus).